The primary structure comprises 520 residues: Probable alginate O-acetylase AlgI (520 aa).

Helical transmembrane passes span Val-7 to Gly-24, Phe-39 to Ile-61, Trp-78 to Val-100, Phe-115 to Ile-137, Asn-150 to Phe-172, Leu-239 to Phe-261, Leu-311 to Ala-333, Val-353 to Ala-375, Ala-402 to Leu-424, and Trp-483 to Leu-505. His-322 is an active-site residue.

The protein belongs to the membrane-bound acyltransferase family.

It is found in the cell inner membrane. It participates in glycan biosynthesis; alginate biosynthesis. In terms of biological role, together with AlgJ and AlgF, forms an inner membrane complex which probably interacts with the alginate polymerization-transport complex and adds acetyl groups at the O-2 and O-3 positions of mannuronate residues. Acetylation of alginate is important for the architecture of biofilms and increases resistance to opsonic killing in the host. This is Probable alginate O-acetylase AlgI (algI) from Pseudomonas aeruginosa (strain ATCC 15692 / DSM 22644 / CIP 104116 / JCM 14847 / LMG 12228 / 1C / PRS 101 / PAO1).